A 602-amino-acid chain; its full sequence is ATP-dependent lipid A-core flippase 1 (602 aa).

Transmembrane regions (helical) follow at residues 36–56 (LGFV…VYFL), 80–100 (LFII…NYCL), 154–174 (ILTI…MFYY), 176–196 (WQLS…VSVV), and 261–281 (ASVP…FYAI). The region spanning 39–321 (VAAIIGMLGY…LTNVNSEFQQ (283 aa)) is the ABC transmembrane type-1 domain. In terms of domain architecture, ABC transporter spans 362–599 (YKNTNTMTTS…QGAYAQLHSF (238 aa)). 398–405 (GRSGSGKS) contributes to the ATP binding site.

Belongs to the ABC transporter superfamily. Lipid exporter (TC 3.A.1.106) family. As to quaternary structure, homodimer.

Its subcellular location is the cell inner membrane. It catalyses the reaction ATP + H2O + lipid A-core oligosaccharideSide 1 = ADP + phosphate + lipid A-core oligosaccharideSide 2.. Its function is as follows. Involved in lipopolysaccharide (LPS) biosynthesis. Translocates lipid A-core from the inner to the outer leaflet of the inner membrane. Transmembrane domains (TMD) form a pore in the inner membrane and the ATP-binding domain (NBD) is responsible for energy generation. In Colwellia psychrerythraea (strain 34H / ATCC BAA-681) (Vibrio psychroerythus), this protein is ATP-dependent lipid A-core flippase 1.